The primary structure comprises 514 residues: Peptide chain release factor 3 (514 aa).

In terms of domain architecture, tr-type G spans 8-268 (KKRRTFAIIS…TFLKFAPEPH (261 aa)). Residues 17 to 24 (SHPDAGKT), 85 to 89 (DTPGH), and 139 to 142 (NKLD) contribute to the GTP site.

The protein belongs to the TRAFAC class translation factor GTPase superfamily. Classic translation factor GTPase family. PrfC subfamily.

Its subcellular location is the cytoplasm. Increases the formation of ribosomal termination complexes and stimulates activities of RF-1 and RF-2. It binds guanine nucleotides and has strong preference for UGA stop codons. It may interact directly with the ribosome. The stimulation of RF-1 and RF-2 is significantly reduced by GTP and GDP, but not by GMP. The polypeptide is Peptide chain release factor 3 (Streptococcus gordonii (strain Challis / ATCC 35105 / BCRC 15272 / CH1 / DL1 / V288)).